Here is a 568-residue protein sequence, read N- to C-terminus: Vitamin H transporter 1 (568 aa).

Transmembrane regions (helical) follow at residues 85–105 (IIPC…TVSL), 123–143 (GYSA…YIIF), 158–178 (IWVS…AVLG), 187–207 (YVAL…GLAY), 222–242 (IGWY…VSAG), 257–277 (WMFL…PWWL), 345–365 (VWPF…IFNY), 384–404 (LLNA…MPLY), 411–431 (FSFF…ANYA), 439–459 (GGLL…MAWC), 470–490 (VGVA…SVVT), and 508–528 (NDVC…EFLL). The disordered stretch occupies residues 547–568 (VEDEQEMTDIKPALPSSQQADA).

This sequence belongs to the major facilitator superfamily. Allantoate permease family.

It localises to the membrane. In terms of biological role, involved in uptake of biotin and desthiobiotin with the concomitant entry of protons. This is Vitamin H transporter 1 (vht1) from Schizosaccharomyces pombe (strain 972 / ATCC 24843) (Fission yeast).